Here is a 224-residue protein sequence, read N- to C-terminus: Ribose-5-phosphate isomerase A (224 aa).

Substrate contacts are provided by residues 34–37 (TGST), 87–90 (DGAD), and 100–103 (KGGG). The Proton acceptor role is filled by glutamate 109. Lysine 127 is a substrate binding site.

It belongs to the ribose 5-phosphate isomerase family. In terms of assembly, homodimer.

It carries out the reaction aldehydo-D-ribose 5-phosphate = D-ribulose 5-phosphate. The protein operates within carbohydrate degradation; pentose phosphate pathway; D-ribose 5-phosphate from D-ribulose 5-phosphate (non-oxidative stage): step 1/1. Catalyzes the reversible conversion of ribose-5-phosphate to ribulose 5-phosphate. This is Ribose-5-phosphate isomerase A from Francisella tularensis subsp. novicida (strain U112).